A 427-amino-acid chain; its full sequence is Sensor histidine kinase ArsS (427 aa).

Transmembrane regions (helical) follow at residues 3-23 and 131-151; these read FSIFFKVVALFMITLFSFGAF and NYFLAITVGLLLILFLFLFVL. An HAMP domain is found at 151–203; sequence LQSLLPLRELRSQVKPFAQGDKSVSCKSKQKDEIGDLANEFDNCILKINAMNE. Residues 211–398 form the Histidine kinase domain; sequence SIMHELRTPI…LSYHYSNGRI (188 aa). His214 bears the Phosphohistidine; by autocatalysis mark.

In terms of processing, autophosphorylated.

It is found in the membrane. It catalyses the reaction ATP + protein L-histidine = ADP + protein N-phospho-L-histidine.. Functionally, member of the two-component regulatory system ArsS/ArsR that regulates genes involved in biofilm formation and acid adaptation by acting on major ammonia-producing pathways. Functions as a sensor protein kinase which is autophosphorylated at a histidine residue and transfers its phosphate group to the conserved aspartic acid residue in the regulatory domain of ArsR. In turn, ArsR binds to the upstream promoter regions of target genes including ureA, amiE and amiF to positively regulate their expression in response to acidic pH. Also participates in acidic acclimatation in a phosphorylation-independent pathway by regulating acid-induced trafficking of urease and its accessory proteins to the inner membrane. The sequence is that of Sensor histidine kinase ArsS from Helicobacter pylori (strain ATCC 700392 / 26695) (Campylobacter pylori).